A 230-amino-acid polypeptide reads, in one-letter code: N-(5'-phosphoribosyl)anthranilate isomerase (230 aa).

Belongs to the TrpF family.

It catalyses the reaction N-(5-phospho-beta-D-ribosyl)anthranilate = 1-(2-carboxyphenylamino)-1-deoxy-D-ribulose 5-phosphate. The protein operates within amino-acid biosynthesis; L-tryptophan biosynthesis; L-tryptophan from chorismate: step 3/5. The sequence is that of N-(5'-phosphoribosyl)anthranilate isomerase from Ralstonia nicotianae (strain ATCC BAA-1114 / GMI1000) (Ralstonia solanacearum).